Here is a 28-residue protein sequence, read N- to C-terminus: Putative antitoxin AF_1079 (28 aa).

The protein belongs to the UPF0165 family.

In terms of biological role, possibly the antitoxin component of a type II toxin-antitoxin (TA) system. The polypeptide is Putative antitoxin AF_1079 (Archaeoglobus fulgidus (strain ATCC 49558 / DSM 4304 / JCM 9628 / NBRC 100126 / VC-16)).